Consider the following 481-residue polypeptide: Leukocyte immunoglobulin-like receptor subfamily A member 6 (481 aa).

The N-terminal stretch at 1 to 23 is a signal peptide; that stretch reads MTPALTALLCLGLSLGPRTHVQA. The Ig-like C2-type 1 domain maps to 24-118; that stretch reads GPLPKPTLWA…PSDPLELVVT (95 aa). The Extracellular segment spans residues 24-447; sequence GPLPKPTLWA…SHAKDYTVEN (424 aa). Residues Cys49 and Cys98 are joined by a disulfide bond. N-linked (GlcNAc...) asparagine glycosylation is present at Asn139. Cystine bridges form between Cys144/Cys196 and Cys245/Cys296. 2 Ig-like C2-type domains span residues 225–314 and 323–408; these read PSLL…DPLN and DRVS…HLLS. 2 N-linked (GlcNAc...) asparagine glycosylation sites follow: Asn301 and Asn340. An intrachain disulfide couples Cys345 to Cys396. Residues 418–439 are disordered; the sequence is VSGPSGGPSLPPTGPPSTPASH. Over residues 426-435 the composition is skewed to pro residues; it reads SLPPTGPPST. The helical transmembrane segment at 448-468 threads the bilayer; sequence LIRMGMAGLVLVVLGILLFEA. The Cytoplasmic segment spans residues 469–481; that stretch reads QHSQRSPQDAARR.

The protein localises to the membrane. Its function is as follows. May act as receptor for class I MHC antigens. This chain is Leukocyte immunoglobulin-like receptor subfamily A member 6 (LILRA6), found in Pan troglodytes (Chimpanzee).